A 466-amino-acid chain; its full sequence is Argininosuccinate lyase (466 aa).

The protein belongs to the lyase 1 family. Argininosuccinate lyase subfamily.

The protein resides in the cytoplasm. The enzyme catalyses 2-(N(omega)-L-arginino)succinate = fumarate + L-arginine. Its pathway is amino-acid biosynthesis; L-arginine biosynthesis; L-arginine from L-ornithine and carbamoyl phosphate: step 3/3. The sequence is that of Argininosuccinate lyase from Campylobacter concisus (strain 13826).